The following is a 411-amino-acid chain: Putative competence-damage inducible protein (411 aa).

It belongs to the CinA family.

The chain is Putative competence-damage inducible protein from Clostridium acetobutylicum (strain ATCC 824 / DSM 792 / JCM 1419 / IAM 19013 / LMG 5710 / NBRC 13948 / NRRL B-527 / VKM B-1787 / 2291 / W).